Reading from the N-terminus, the 355-residue chain is MANAKETTFYITISVVAFVIGKIVIALLFYKRWKRKHTIHENGFPVKGGGKMVMFRSQLLNSVSSDMFMKKTHKLSNKDILGSGGFGTVYRLVIDDSTTFAVKRLNRGTSERDRGFHRELEAMADIKHRNIVTLHGYFTSPHYNLLIYELMPNGSLDSFLHGRKALDWASRYRIAVGAARGISYLHHDCIPHIIHRDIKSSNILLDHNMEARVSDFGLATLMEPDKTHVSTFVAGTFGYLAPEYFDTGKATMKGDVYSFGVVLLELLTGRKPTDDEFFEEGTKLVTWVKGVVRDQREEVVIDNRLRGSSVQENEEMNDVFGIAMMCLEPEPAIRPAMTEVVKLLEYIKLSTRSSF.

Residues 1 to 8 (MANAKETT) lie on the Extracellular side of the membrane. The chain crosses the membrane as a helical span at residues 9-29 (FYITISVVAFVIGKIVIALLF). The Cytoplasmic portion of the chain corresponds to 30 to 355 (YKRWKRKHTI…YIKLSTRSSF (326 aa)). The Protein kinase domain occupies 75 to 347 (LSNKDILGSG…TEVVKLLEYI (273 aa)). Residues 81–89 (LGSGGFGTV) and K103 each bind ATP. Y148 is modified (phosphotyrosine). D197 serves as the catalytic Proton acceptor. S201 and S230 each carry phosphoserine. 2 positions are modified to phosphothreonine: T231 and T236. Phosphotyrosine is present on Y244.

This sequence belongs to the protein kinase superfamily. Ser/Thr protein kinase family.

The protein localises to the cell membrane. It carries out the reaction L-seryl-[protein] + ATP = O-phospho-L-seryl-[protein] + ADP + H(+). It catalyses the reaction L-threonyl-[protein] + ATP = O-phospho-L-threonyl-[protein] + ADP + H(+). In Arabidopsis thaliana (Mouse-ear cress), this protein is Receptor-like serine/threonine-protein kinase At1g78530.